Here is a 590-residue protein sequence, read N- to C-terminus: Transcription factor GTE7 (590 aa).

The disordered stretch occupies residues 125–160 (LNNFTGEKNDLGPKKKKQKKNVSGLKRSNQFGPSDP). Positions 164 to 270 (KLLAGMLNTC…DHFDGMFNPA (107 aa)) constitute a Bromo domain. Disordered regions lie at residues 282-400 (TGSS…KDPN) and 476-590 (RQGF…EAQC). Residues 288–298 (PEPDFKPDFKQ) are compositionally biased toward basic and acidic residues. Pro residues predominate over residues 347–369 (PSPPPPPPVIQPELPQPQPPPPQ). In terms of domain architecture, NET spans 394–475 (PKAKDPNKRL…NYKKMASKIK (82 aa)). A compositionally biased stretch (basic and acidic residues) spans 498-508 (SAEKRTRRGDA). The span at 509–521 (GEEDVDIGEDIPI) shows a compositional bias: acidic residues. Over residues 537–562 (AAAASSGSSSSGSSSSSGGSSSSSDS) the composition is skewed to low complexity.

The protein resides in the nucleus. The protein is Transcription factor GTE7 (GTE7) of Arabidopsis thaliana (Mouse-ear cress).